The primary structure comprises 308 residues: MTSKLEQLKQFTTVVADTGDLDAITRLKPVDATTNPSLLLKAAAIPGYADLLKQVKADAKGNVDLACDKFAVAVGSGILKVIPGRISTEVDARLSFDEPALLNKARQLIALYEAAGVAKERVLIKLASTWEGIRAAEQLEKEGIQTNLTLLFSFAQAQACADAGVFLISPFVGRIYDWYKKSTGQEYVGAEDPGVQSVTRIYNYYKANGYNTVVMGASFRNIGQIEQLAGCDRLTISPELLQQLSDDQGELPQVLKPGNAGEAKQHLNESQFRWAMNEDAMGTEKLAEGIRQFARDQEKLEKLIAEKA.

Lys125 serves as the catalytic Schiff-base intermediate with substrate.

Belongs to the transaldolase family. Type 1 subfamily. Homodimer.

The protein resides in the cytoplasm. It catalyses the reaction D-sedoheptulose 7-phosphate + D-glyceraldehyde 3-phosphate = D-erythrose 4-phosphate + beta-D-fructose 6-phosphate. It functions in the pathway carbohydrate degradation; pentose phosphate pathway; D-glyceraldehyde 3-phosphate and beta-D-fructose 6-phosphate from D-ribose 5-phosphate and D-xylulose 5-phosphate (non-oxidative stage): step 2/3. Functionally, transaldolase is important for the balance of metabolites in the pentose-phosphate pathway. The chain is Transaldolase from Pseudomonas putida (strain ATCC 47054 / DSM 6125 / CFBP 8728 / NCIMB 11950 / KT2440).